The following is a 309-amino-acid chain: tRNA dimethylallyltransferase (309 aa).

9 to 16 (GPTAVGKT) contacts ATP. 11–16 (TAVGKT) provides a ligand contact to substrate. The segment at 34–37 (DSMQ) is interaction with substrate tRNA.

Belongs to the IPP transferase family. Monomer. It depends on Mg(2+) as a cofactor.

The enzyme catalyses adenosine(37) in tRNA + dimethylallyl diphosphate = N(6)-dimethylallyladenosine(37) in tRNA + diphosphate. Catalyzes the transfer of a dimethylallyl group onto the adenine at position 37 in tRNAs that read codons beginning with uridine, leading to the formation of N6-(dimethylallyl)adenosine (i(6)A). The sequence is that of tRNA dimethylallyltransferase from Clostridium acetobutylicum (strain ATCC 824 / DSM 792 / JCM 1419 / IAM 19013 / LMG 5710 / NBRC 13948 / NRRL B-527 / VKM B-1787 / 2291 / W).